The sequence spans 199 residues: GTP cyclohydrolase-2 (199 aa).

A GTP-binding site is contributed by 49-53 (RIHSE). Positions 54, 65, and 67 each coordinate Zn(2+). GTP is bound by residues Gln-70, 92-94 (EGR), and Thr-114. The active-site Proton acceptor is Asp-126. The active-site Nucleophile is Arg-128. Residues Thr-149 and Lys-154 each coordinate GTP.

It belongs to the GTP cyclohydrolase II family. Homodimer. It depends on Zn(2+) as a cofactor.

It carries out the reaction GTP + 4 H2O = 2,5-diamino-6-hydroxy-4-(5-phosphoribosylamino)-pyrimidine + formate + 2 phosphate + 3 H(+). Its pathway is cofactor biosynthesis; riboflavin biosynthesis; 5-amino-6-(D-ribitylamino)uracil from GTP: step 1/4. Catalyzes the conversion of GTP to 2,5-diamino-6-ribosylamino-4(3H)-pyrimidinone 5'-phosphate (DARP), formate and pyrophosphate. The chain is GTP cyclohydrolase-2 from Blochmanniella floridana.